We begin with the raw amino-acid sequence, 365 residues long: Isopentenyl-diphosphate delta-isomerase (365 aa).

A substrate-binding site is contributed by 4–5 (RK). Residues 62–64 (GMT), Ser-92, and Asn-121 each bind FMN. Residue 92-94 (SQR) participates in substrate binding. Gln-155 provides a ligand contact to substrate. Residue Glu-156 participates in Mg(2+) binding. Residues Lys-187, Thr-216, 267 to 269 (GVR), and 288 to 289 (AL) each bind FMN.

It belongs to the IPP isomerase type 2 family. As to quaternary structure, homooctamer. Dimer of tetramers. The cofactor is FMN. NADPH serves as cofactor. Mg(2+) is required as a cofactor.

It is found in the cytoplasm. It catalyses the reaction isopentenyl diphosphate = dimethylallyl diphosphate. Its function is as follows. Involved in the biosynthesis of isoprenoids. Catalyzes the 1,3-allylic rearrangement of the homoallylic substrate isopentenyl (IPP) to its allylic isomer, dimethylallyl diphosphate (DMAPP). In Methanopyrus kandleri (strain AV19 / DSM 6324 / JCM 9639 / NBRC 100938), this protein is Isopentenyl-diphosphate delta-isomerase.